The sequence spans 72 residues: Large ribosomal subunit protein bL31 (72 aa).

Zn(2+) is bound by residues Cys16, Cys18, Cys38, and Cys41.

The protein belongs to the bacterial ribosomal protein bL31 family. Type A subfamily. In terms of assembly, part of the 50S ribosomal subunit. It depends on Zn(2+) as a cofactor.

Binds the 23S rRNA. The chain is Large ribosomal subunit protein bL31 from Vibrio atlanticus (strain LGP32) (Vibrio splendidus (strain Mel32)).